A 707-amino-acid polypeptide reads, in one-letter code: Ribosome biogenesis protein ENP2 (707 aa).

5 WD repeats span residues 54-94, 178-217, 226-265, 269-310, and 312-351; these read EFSE…LKFD, LDTEGVNHVSINEVNGLLAAGTETNVVEFWDPRSRSRVSK, NRPFQVTTTSFRNDGLTFACGTSNGYSYIYDLRTSEPSII, GYGF…AYAS, and EPSVDINDIEHVPGTGMFFTANESIPMHTYYIPSLGPSPR. The disordered stretch occupies residues 523 to 707; sequence LTAAEESDEE…RASKNAFRGM (185 aa). The residue at position 529 (Ser529) is a Phosphoserine. The segment covering 532–544 has biased composition (basic and acidic residues); it reads ERIAMKDGRGHYD. Residues 545–558 are compositionally biased toward acidic residues; the sequence is YEDEESDEEESDDE. Phosphoserine occurs at positions 550 and 555. 4 stretches are compositionally biased toward basic and acidic residues: residues 559 to 598, 629 to 647, 659 to 671, and 680 to 697; these read TNQKSNKEELSEKDLRKMEKQKALIERRKKEKEQSERFMN, ENGKKSNESILRRNQRGEA, KDGNYKSRRHDNS, and NGNKKDNGRSKPRFENRR.

It belongs to the WD repeat NOL10/ENP2 family. As to quaternary structure, component of the 90S pre-ribosomes.

The protein resides in the nucleus. The protein localises to the nucleolus. In terms of biological role, may be involved in rRNA-processing and ribosome biosynthesis. The protein is Ribosome biogenesis protein ENP2 (ENP2) of Saccharomyces cerevisiae (strain ATCC 204508 / S288c) (Baker's yeast).